The sequence spans 68 residues: MMLYPSIDNLLLKIDSKYSLVTVAAKRARYMQLENDKGVLPSYQSDKFVGKALEEIHAGKLVLQNDDK.

It belongs to the RNA polymerase subunit omega family. As to quaternary structure, the RNAP catalytic core consists of 2 alpha, 1 beta, 1 beta' and 1 omega subunit. When a sigma factor is associated with the core the holoenzyme is formed, which can initiate transcription.

It carries out the reaction RNA(n) + a ribonucleoside 5'-triphosphate = RNA(n+1) + diphosphate. In terms of biological role, promotes RNA polymerase assembly. Latches the N- and C-terminal regions of the beta' subunit thereby facilitating its interaction with the beta and alpha subunits. This is DNA-directed RNA polymerase subunit omega from Listeria monocytogenes serotype 4b (strain CLIP80459).